The sequence spans 274 residues: Protein FAM210A (274 aa).

Residues 51 to 66 (KWLHSQPKQQDSSTKT) are compositionally biased toward polar residues. The tract at residues 51–91 (KWLHSQPKQQDSSTKTPVHDLPSGSQHQSEESSPSAKSSIS) is disordered. Residues 81–91 (ESSPSAKSSIS) are compositionally biased toward low complexity. The DUF1279 domain maps to 105-217 (DQSIGLLKRF…GYLSTPPLVK (113 aa)). The helical transmembrane segment at 124-144 (VLIPVHLVTSSFWFGSFYYAA) threads the bilayer. Positions 221 to 274 (QDRMEETKELFTEKMEETRDIISGKMEETKDRISEKLQETKDRVAFRKKKNEEM) form a coiled coil.

It belongs to the FAM210 family.

The protein resides in the membrane. The protein localises to the mitochondrion. It localises to the cytoplasm. May play a role in the structure and strength of both muscle and bone. In Xenopus tropicalis (Western clawed frog), this protein is Protein FAM210A (fam210a).